We begin with the raw amino-acid sequence, 1107 residues long: Membrane-associated guanylate kinase, WW and PDZ domain-containing protein 3 (1107 aa).

Residues 17-102 form the PDZ 1 domain; the sequence is ECGLSGVGGD…PIRLKTVKPG (86 aa). The 175-residue stretch at 110-284 folds into the Guanylate kinase-like domain; that stretch reads RHYLSLQFQK…SMDFRNYLTR (175 aa). 117-124 serves as a coordination point for ATP; that stretch reads FQKGSIDH. The tract at residues 210 to 277 is disordered; it reads FDTETQRKRT…SYNQTNSSMD (68 aa). The segment covering 220–231 has biased composition (polar residues); the sequence is TSVSKMQRTDSS. The span at 232–241 shows a compositional bias: acidic residues; it reads LPEEEDEEER. The span at 251–261 shows a compositional bias: basic and acidic residues; that stretch reads TDHRDRQEPSE. A compositionally biased stretch (polar residues) spans 267-277; that stretch reads PSYNQTNSSMD. WW domains follow at residues 289 to 322 and 335 to 368; these read EPLPKNWEMAYTEAGMIYFIDHNTKTTTWLDPRL and GELPYGWEKIEDPQYGTYYVDHINQKTQFDNPVL. Positions 374 to 398 are disordered; it reads KQLNPAPSEGTVHQEPENSQFTRDP. PDZ domains are found at residues 407–489, 577–653, 727–809, and 853–940; these read HTSL…TLCR, TIPL…LILR, DVFL…TVRR, and DVIL…IAEE. The tract at residues 941 to 975 is disordered; the sequence is EHRGPPSGSNSARQSPAPQHRPMGQTQPTYGTLDR. The span at 947 to 957 shows a compositional bias: polar residues; sequence SGSNSARQSPA. Residues 1003–1085 form the PDZ 6 domain; the sequence is PVELERGPRG…KVLLLLRPGT (83 aa).

This sequence belongs to the MAGUK family.

It localises to the cell membrane. The protein localises to the cell junction. Its subcellular location is the tight junction. Its function is as follows. Acts as a scaffolding protein at cell-cell junctions, thereby regulating various cellular and signaling processes. This is Membrane-associated guanylate kinase, WW and PDZ domain-containing protein 3 (magi3) from Xenopus tropicalis (Western clawed frog).